The chain runs to 213 residues: Putative thymidylate kinase 251L (213 aa).

21-28 (GCDKTGKS) provides a ligand contact to ATP.

It belongs to the thymidylate kinase family.

The catalysed reaction is dTMP + ATP = dTDP + ADP. Its pathway is pyrimidine metabolism; dTTP biosynthesis. In terms of biological role, catalyzes the conversion of dTMP to dTDP. The protein is Putative thymidylate kinase 251L of Acheta domesticus (House cricket).